A 229-amino-acid chain; its full sequence is DNA mismatch repair protein MutH (229 aa).

Belongs to the MutH family.

It localises to the cytoplasm. Its function is as follows. Sequence-specific endonuclease that cleaves unmethylated GATC sequences. It is involved in DNA mismatch repair. The chain is DNA mismatch repair protein MutH from Escherichia coli O6:K15:H31 (strain 536 / UPEC).